A 69-amino-acid chain; its full sequence is Calcium-binding protein (69 aa).

EF-hand domains follow at residues 2–37 and 38–69; these read VNRT…VNCP and FKKE…VLCS. Residues Asp15, Asp17, Ser19, Lys21, Glu26, Asp51, Asp53, Asp55, Gln57, and Glu62 each coordinate Ca(2+).

The protein is Calcium-binding protein of Schistosoma mansoni (Blood fluke).